A 108-amino-acid chain; its full sequence is UPF0060 membrane protein YnfA (108 aa).

Residues 1–5 (MIKTT) lie on the Periplasmic side of the membrane. Residues 6 to 26 (LLFFATALCEIIGCFLPWLWL) form a helical membrane-spanning segment. The Cytoplasmic portion of the chain corresponds to 27-30 (KRNA). The chain crosses the membrane as a helical span at residues 31–51 (SIWLLLPAGISLALFVWLLTL). Over 52 to 60 (HPAASGRVY) the chain is Periplasmic. A helical transmembrane segment spans residues 61–81 (AAYGGVYVCTALIWLRVVDGV). The Cytoplasmic portion of the chain corresponds to 82–84 (KLT). The helical transmembrane segment at 85–105 (LYDWTGALIALCGMLIIVAGW) threads the bilayer. The Periplasmic portion of the chain corresponds to 106–108 (GRT).

Belongs to the UPF0060 family.

It localises to the cell inner membrane. The chain is UPF0060 membrane protein YnfA from Escherichia coli O127:H6 (strain E2348/69 / EPEC).